A 106-amino-acid polypeptide reads, in one-letter code: Large ribosomal subunit protein uL24 (106 aa).

The protein belongs to the universal ribosomal protein uL24 family. Part of the 50S ribosomal subunit.

One of two assembly initiator proteins, it binds directly to the 5'-end of the 23S rRNA, where it nucleates assembly of the 50S subunit. Functionally, one of the proteins that surrounds the polypeptide exit tunnel on the outside of the subunit. In Bordetella avium (strain 197N), this protein is Large ribosomal subunit protein uL24.